We begin with the raw amino-acid sequence, 906 residues long: Rho GTPase-activating protein gacJ (906 aa).

The segment at 53–117 is disordered; the sequence is LEGHLNPSSH…RDNSRSDNIR (65 aa). Residues 69 to 79 show a composition bias toward low complexity; that stretch reads NNNNNNNNNNN. The span at 92–117 shows a compositional bias: basic and acidic residues; the sequence is SRSDSKHHNRENSKSDRDNSRSDNIR. In terms of domain architecture, Rho-GAP spans 161–348; the sequence is EELQSLYPDQ…YMLEYFNDIF (188 aa). 3 disordered regions span residues 368 to 415, 452 to 864, and 877 to 906; these read DTTS…SRSK, EIIP…SVLT, and ANQAKKNPLSNSGGLKQISPDLIKSNNINK. Positions 381–404 are enriched in polar residues; the sequence is NGGSPRTSNTPYQQQHQLSSQSMA. The span at 461–487 shows a compositional bias: low complexity; sequence TTTTTTTTTNTTTTTTTTNTTPNNTTT. 2 stretches are compositionally biased toward pro residues: residues 494 to 510 and 547 to 560; these read PVPPKPNLIPRKLPPNP and QPPPPRKPTSPSPP. A compositionally biased stretch (polar residues) spans 565 to 574; that stretch reads KPTSKSDFIP. Composition is skewed to low complexity over residues 575–597 and 613–629; these read STNNNLNNNNTTTTTSSLISIPK and IEEPINPNLNINSTTTT. Positions 637-649 are enriched in polar residues; the sequence is FKNNGTISSGSKS. 2 stretches are compositionally biased toward low complexity: residues 650-663 and 683-694; these read NPNLQNLLNTNQPL and SKPITTTPTIKK. Over residues 708–721 the composition is skewed to pro residues; the sequence is PPSPSSSSPSPPHN. 3 stretches are compositionally biased toward low complexity: residues 754–772, 785–816, and 844–861; these read PTIPTQTTTASSSSTPTTP, PPINTSQTNNNISNSSIPSPKSKSALSLSTPK, and SSPTSSSPLQSPKISSPS. Residues 880-890 show a composition bias toward polar residues; sequence AKKNPLSNSGG.

It localises to the cytoplasm. Functionally, rho GTPase-activating protein involved in the signal transduction pathway. The protein is Rho GTPase-activating protein gacJ (gacJ) of Dictyostelium discoideum (Social amoeba).